Consider the following 688-residue polypeptide: Glycine--tRNA ligase beta subunit (688 aa).

The protein belongs to the class-II aminoacyl-tRNA synthetase family. As to quaternary structure, tetramer of two alpha and two beta subunits.

The protein localises to the cytoplasm. It carries out the reaction tRNA(Gly) + glycine + ATP = glycyl-tRNA(Gly) + AMP + diphosphate. This is Glycine--tRNA ligase beta subunit from Shewanella oneidensis (strain ATCC 700550 / JCM 31522 / CIP 106686 / LMG 19005 / NCIMB 14063 / MR-1).